The primary structure comprises 54 residues: Large ribosomal subunit protein bL33B (54 aa).

It belongs to the bacterial ribosomal protein bL33 family.

In Mycolicibacterium vanbaalenii (strain DSM 7251 / JCM 13017 / BCRC 16820 / KCTC 9966 / NRRL B-24157 / PYR-1) (Mycobacterium vanbaalenii), this protein is Large ribosomal subunit protein bL33B.